A 59-amino-acid polypeptide reads, in one-letter code: UPF0337 protein MM_2677 (59 aa).

Basic and acidic residues-rich tracts occupy residues 1 to 24 (MKEG…KESA) and 33 to 59 (MEAK…EFEK). The segment at 1–59 (MKEGTKEEMEGKFSKAKGEIKESAGEMTGDIEMEAKGEAEKRKGEAQEKVGKIRKEFEK) is disordered.

The protein belongs to the UPF0337 (CsbD) family.

In Methanosarcina mazei (strain ATCC BAA-159 / DSM 3647 / Goe1 / Go1 / JCM 11833 / OCM 88) (Methanosarcina frisia), this protein is UPF0337 protein MM_2677.